Consider the following 365-residue polypeptide: Solute carrier family 35 member G1 (365 aa).

A disordered region spans residues 1–33; it reads MRPQDSTGVAELQEPGLPLTDDAPPGATEEPAA. A compositionally biased stretch (low complexity) spans 23–33; it reads APPGATEEPAA. 10 helical membrane passes run 69–89, 97–117, 131–151, 156–176, 187–207, 222–242, 252–272, 286–306, 311–333, and 338–357; these read GLGL…SLFV, AVEI…PCLI, IFLI…YYAY, LADA…FAWI, ALFT…PFLF, LKGT…LVIL, FLSI…ILSV, LFLI…TKAL, AGPV…IIFF, and TWWT…GAAI. 2 EamA domains span residues 80–202 and 233–357; these read FLFS…LIVR and VFAA…GAAI.

It belongs to the TMEM20 family. As to quaternary structure, interacts with STIM1; stimulated by depletion of intracellular calcium. Interacts with ORAI1. Interacts with the plasma membrane calcium-transporting ATPases ATP2B1 and ATP2B4. Interacts with ATP1A1, ATP2A2, KPNB1 and XPO1. Ubiquitously expressed.

The protein resides in the cell membrane. It localises to the endoplasmic reticulum membrane. Functionally, may play a role in intracellular calcium sensing and homeostasis. May act as a negative regulator of plasma membrane calcium-transporting ATPases preventing calcium efflux from the cell. This is Solute carrier family 35 member G1 (SLC35G1) from Homo sapiens (Human).